A 239-amino-acid chain; its full sequence is Small ribosomal subunit protein uS2 (239 aa).

It belongs to the universal ribosomal protein uS2 family.

The chain is Small ribosomal subunit protein uS2 from Synechococcus sp. (strain WH7803).